Consider the following 191-residue polypeptide: A-type ATP synthase subunit E (191 aa).

This sequence belongs to the V-ATPase E subunit family. Has multiple subunits with at least A(3), B(3), C, D, E, F, H, I and proteolipid K(x). In terms of processing, the N-terminus is blocked.

It is found in the cell membrane. Functionally, component of the A-type ATP synthase that produces ATP from ADP in the presence of a proton gradient across the membrane. This chain is A-type ATP synthase subunit E, found in Sulfurisphaera tokodaii (strain DSM 16993 / JCM 10545 / NBRC 100140 / 7) (Sulfolobus tokodaii).